The primary structure comprises 96 residues: Keratin-associated protein 12-3 (96 aa).

Tandem repeats lie at residues 10–14, 15–19, 24–28, 30–34, 35–39, 45–49, 50–54, 55–59, 60–64, 70–74, 75–79, 80–84, 85–89, and 90–94. Positions 10 to 94 are 14 X 5 AA approximate repeats; it reads CQPTCCIHSP…CRPISCSTPS (85 aa).

The protein belongs to the KRTAP type 12 family. As to quaternary structure, interacts with hair keratins. Restricted to a narrow region of the hair fiber cuticle, lying approximately 20 cell layers above the apex of the dermal papilla of the hair root; not detected in any other tissues.

Its function is as follows. In the hair cortex, hair keratin intermediate filaments are embedded in an interfilamentous matrix, consisting of hair keratin-associated proteins (KRTAP), which are essential for the formation of a rigid and resistant hair shaft through their extensive disulfide bond cross-linking with abundant cysteine residues of hair keratins. The matrix proteins include the high-sulfur and high-glycine-tyrosine keratins. This is Keratin-associated protein 12-3 (KRTAP12-3) from Homo sapiens (Human).